A 293-amino-acid chain; its full sequence is ATP synthase gamma chain (293 aa).

This sequence belongs to the ATPase gamma chain family. As to quaternary structure, F-type ATPases have 2 components, CF(1) - the catalytic core - and CF(0) - the membrane proton channel. CF(1) has five subunits: alpha(3), beta(3), gamma(1), delta(1), epsilon(1). CF(0) has three main subunits: a, b and c.

Its subcellular location is the cell inner membrane. In terms of biological role, produces ATP from ADP in the presence of a proton gradient across the membrane. The gamma chain is believed to be important in regulating ATPase activity and the flow of protons through the CF(0) complex. The protein is ATP synthase gamma chain of Allorhizobium ampelinum (strain ATCC BAA-846 / DSM 112012 / S4) (Agrobacterium vitis (strain S4)).